A 637-amino-acid polypeptide reads, in one-letter code: Extracellular metalloproteinase MEP (637 aa).

A signal peptide spans 1–21; sequence MRSVDSLLLLGLTGLASQANA. A propeptide spanning residues 22 to 246 is cleaved from the precursor; the sequence is HPAKRQPNDS…VVGVVDYVAD (225 aa). The N-linked (GlcNAc...) asparagine glycan is linked to Asn-288. His-431 provides a ligand contact to Zn(2+). Glu-432 is an active-site residue. His-435 serves as a coordination point for Zn(2+).

Belongs to the peptidase M36 family. The cofactor is Zn(2+).

It is found in the secreted. Its function is as follows. Secreted metalloproteinase that probably acts as a virulence factor. Cleaves Z.mays Endochitinase A (CHIA) between residues 'Gly-29' and 'Cys-30'. The protein is Extracellular metalloproteinase MEP (MEP) of Fusarium vanettenii (strain ATCC MYA-4622 / CBS 123669 / FGSC 9596 / NRRL 45880 / 77-13-4) (Fusarium solani subsp. pisi).